The primary structure comprises 247 residues: GTP cyclohydrolase 1 type 2 homolog (247 aa).

Residues His-63, His-64, Asp-101, His-215, and Glu-219 each contribute to the a divalent metal cation site.

This sequence belongs to the GTP cyclohydrolase I type 2/NIF3 family. As to quaternary structure, toroid-shaped homohexamer. In the hexamer, 3 dimers assemble to form a ring-like structure surrounding a central hole.

Provides significant protection from radiation damage and may be involved in the degradation of radiation-damaged nucleotides. The polypeptide is GTP cyclohydrolase 1 type 2 homolog (ybgI) (Escherichia coli O157:H7).